The primary structure comprises 896 residues: Cytokine receptor common subunit beta (896 aa).

The N-terminal stretch at 1–22 (MDQQMALTWGLCYMALVALCWG) is a signal peptide. Residues 23–441 (HGVTEAEETV…SEEYTWKTDW (419 aa)) lie on the Extracellular side of the membrane. Residues C39 and C49 are joined by a disulfide bond. An N-linked (GlcNAc...) asparagine glycan is attached at N62. Intrachain disulfides connect C77–C99 and C88–C94. The Fibronectin type-III 1 domain maps to 136–243 (PPLPKNVSIS…PEVHWDSQPG (108 aa)). The N-linked (GlcNAc...) asparagine glycan is linked to N141. Over residues 220-233 (SPGSSLSGRPSRWS) the composition is skewed to low complexity. Residues 220–243 (SPGSSLSGRPSRWSPEVHWDSQPG) form a disordered region. Cystine bridges form between C253/C263 and C292/C310. Positions 343–439 (QMEPPTLNLT…KWSEEYTWKT (97 aa)) constitute a Fibronectin type-III 2 domain. N-linked (GlcNAc...) asparagine glycosylation is present at N350. The short motif at 428–432 (WSKWS) is the WSXWS motif element. A helical transmembrane segment spans residues 442 to 463 (VMPTLWIVLILVFLILTLLLIL). Topologically, residues 464–896 (RFGCVSVYRT…WDNSQSGKVC (433 aa)) are cytoplasmic. A Box 1 motif motif is present at residues 477 to 485 (WKEKIPNPS). Disordered regions lie at residues 543-620 (EDPN…GGSL) and 658-725 (CGSS…TGPL). 2 stretches are compositionally biased toward polar residues: residues 555–571 (PDTTPAASSESTEQLPN) and 658–668 (CGSSLETSGSP). A compositionally biased stretch (low complexity) spans 716–725 (PVLTLPTGPL). Phosphoserine occurs at positions 752 and 754. Position 765 is a phosphotyrosine (Y765). Positions 771 to 810 (SVSQAAKSPPGHPAPPVASSPTVIPGEPREEVGPASPHPE) are disordered.

Belongs to the type I cytokine receptor family. Type 4 subfamily. Heterodimer of an alpha and a beta subunit. The beta subunit is common to the IL3, IL5 and GM-CSF receptors. The signaling GM-CSF receptor complex is a dodecamer of two head-to-head hexamers of two alpha, two beta, and two ligand subunits. Interacts with TMEM102; this interaction occurs preferentially in the absence of CSF2. Interacts with FCER1G; this interaction is direct. Interacts with LYN. May be phosphorylated by LYN.

It localises to the membrane. In terms of biological role, high affinity receptor for interleukin-3, interleukin-5 and granulocyte-macrophage colony-stimulating factor. The sequence is that of Cytokine receptor common subunit beta (Csf2rb) from Mus musculus (Mouse).